The chain runs to 158 residues: U4/U6.U5 small nuclear ribonucleoprotein 27 kDa protein (158 aa).

Positions 1 to 30 (MGRSRSRTPPRRERRRSRSSSRDRERRRRE) are enriched in basic residues. A disordered region spans residues 1 to 100 (MGRSRSRTPP…ISAEDMQGKT (100 aa)). The span at 31 to 41 (RERSRSRDRDR) shows a compositional bias: basic and acidic residues. Residues 42–62 (RRSRSRSPHRRRSRSPRRHRS) are compositionally biased toward basic residues. Over residues 69–86 (RQKDRRDDDRKDVKEKPA) the composition is skewed to basic and acidic residues.

The protein belongs to the SNUT3 family. In terms of assembly, part of a tri-snRNP complex.

Its subcellular location is the nucleus. Functionally, may play a role in mRNA splicing. This is U4/U6.U5 small nuclear ribonucleoprotein 27 kDa protein (snrnp27) from Danio rerio (Zebrafish).